A 389-amino-acid polypeptide reads, in one-letter code: Phospho-N-acetylmuramoyl-pentapeptide-transferase (389 aa).

Helical transmembrane passes span 25–45 (RAVMATITALLIGLVCGPAVI), 73–93 (TMGGVLILLGIAVATLLWADL), 97–117 (FIWIVMLVTFGFGVIGWVDDY), 135–155 (FWQSVIGLFAAVYLAFSVSEA), 190–210 (ISYPLGVWGFIVLTYLVIVGA), 222–242 (GLVIMPVVLVGASLGVFAYVM), 259–279 (AGELLIFCSAMGGAGLAFLWF), 287–307 (FMGDVGALALGGALGTVAVIV), 311–331 (IVLFIMGGIFVAETLSVMLQV), and 366–386 (QVVVRFWIITLMLCLFGLSTL).

The protein belongs to the glycosyltransferase 4 family. MraY subfamily. Requires Mg(2+) as cofactor.

The protein localises to the cell inner membrane. It catalyses the reaction UDP-N-acetyl-alpha-D-muramoyl-L-alanyl-gamma-D-glutamyl-meso-2,6-diaminopimeloyl-D-alanyl-D-alanine + di-trans,octa-cis-undecaprenyl phosphate = di-trans,octa-cis-undecaprenyl diphospho-N-acetyl-alpha-D-muramoyl-L-alanyl-D-glutamyl-meso-2,6-diaminopimeloyl-D-alanyl-D-alanine + UMP. The protein operates within cell wall biogenesis; peptidoglycan biosynthesis. Its function is as follows. Catalyzes the initial step of the lipid cycle reactions in the biosynthesis of the cell wall peptidoglycan: transfers peptidoglycan precursor phospho-MurNAc-pentapeptide from UDP-MurNAc-pentapeptide onto the lipid carrier undecaprenyl phosphate, yielding undecaprenyl-pyrophosphoryl-MurNAc-pentapeptide, known as lipid I. The protein is Phospho-N-acetylmuramoyl-pentapeptide-transferase of Paraburkholderia xenovorans (strain LB400).